Consider the following 256-residue polypeptide: ATP synthase peripheral stalk subunit b, mitochondrial (256 aa).

A mitochondrion-targeting transit peptide spans 1-42; that stretch reads MLSRVVLSAAAAAAPSLKNAALLGPGVLQATRIFHTGQPSLA. Lys-131 carries the N6-succinyllysine modification. N6-acetyllysine occurs at positions 139, 154, 162, 221, 233, and 244.

This sequence belongs to the eukaryotic ATPase B chain family. Component of the ATP synthase complex composed at least of ATP5F1A/subunit alpha, ATP5F1B/subunit beta, ATP5MC1/subunit c (homooctomer), MT-ATP6/subunit a, MT-ATP8/subunit 8, ATP5ME/subunit e, ATP5MF/subunit f, ATP5MG/subunit g, ATP5MK/subunit k, ATP5MJ/subunit j, ATP5F1C/subunit gamma, ATP5F1D/subunit delta, ATP5F1E/subunit epsilon, ATP5PF/subunit F6, ATP5PB/subunit b, ATP5PD/subunit d, ATP5PO/subunit OSCP. ATP synthase complex consists of a soluble F(1) head domain (subunits alpha(3) and beta(3)) - the catalytic core - and a membrane F(0) domain - the membrane proton channel (subunits c, a, 8, e, f, g, k and j). These two domains are linked by a central stalk (subunits gamma, delta, and epsilon) rotating inside the F1 region and a stationary peripheral stalk (subunits F6, b, d, and OSCP).

It is found in the mitochondrion. It localises to the mitochondrion inner membrane. Subunit b, of the mitochondrial membrane ATP synthase complex (F(1)F(0) ATP synthase or Complex V) that produces ATP from ADP in the presence of a proton gradient across the membrane which is generated by electron transport complexes of the respiratory chain. ATP synthase complex consist of a soluble F(1) head domain - the catalytic core - and a membrane F(1) domain - the membrane proton channel. These two domains are linked by a central stalk rotating inside the F(1) region and a stationary peripheral stalk. During catalysis, ATP synthesis in the catalytic domain of F(1) is coupled via a rotary mechanism of the central stalk subunits to proton translocation. In vivo, can only synthesize ATP although its ATP hydrolase activity can be activated artificially in vitro. Part of the complex F(0) domain. Part of the complex F(0) domain and the peripheric stalk, which acts as a stator to hold the catalytic alpha(3)beta(3) subcomplex and subunit a/ATP6 static relative to the rotary elements. The polypeptide is ATP synthase peripheral stalk subunit b, mitochondrial (Bos taurus (Bovine)).